The primary structure comprises 265 residues: Bidirectional sugar transporter SWEET7b (265 aa).

Over 1-9 (MVSPDLIRN) the chain is Extracellular. A helical membrane pass occupies residues 10-30 (MVGIVGNIISFGLFLSPVPTF). A MtN3/slv 1 domain is found at 10–97 (MVGIVGNIIS…TIFFLFSDKK (88 aa)). Topologically, residues 31–45 (YRIIKNKDVQDFKAD) are cytoplasmic. A helical transmembrane segment spans residues 46–66 (PYLATLLNCMLWVFYGLPIVH). At 67 to 69 (PNS) the chain is on the extracellular side. Residues 70 to 90 (ILVVTINGIGLVIEAVYLTIF) form a helical membrane-spanning segment. Topologically, residues 91-101 (FLFSDKKNKKK) are cytoplasmic. Residues 102–122 (MGVVLATEALFMAAVVLGVLL) traverse the membrane as a helical segment. Over 123–131 (GAHTHQRRS) the chain is Extracellular. A helical transmembrane segment spans residues 132–152 (LIVGILCVIFGTIMYSSPLTI). The 83-residue stretch at 133–215 (IVGILCVIFG…QLILYAIYYR (83 aa)) folds into the MtN3/slv 2 domain. Over 153 to 165 (MSQVVKTKSVEYM) the chain is Cytoplasmic. The chain crosses the membrane as a helical span at residues 166 to 186 (PLLLSVVSFLNGLCWTSYALI). The Extracellular segment spans residues 187 to 189 (RLD). The helical transmembrane segment at 190-210 (IFITIPNGLGVLFALMQLILY) threads the bilayer. The Cytoplasmic segment spans residues 211-265 (AIYYRTIPKKQDKNLELPTVAPVAKDTSIVTPVSKDDDVDGGNASHVTINITIEL).

This sequence belongs to the SWEET sugar transporter family. Forms homooligomers and/or heterooligomers.

The protein localises to the cell membrane. Functionally, mediates both low-affinity uptake and efflux of sugar across the plasma membrane. The chain is Bidirectional sugar transporter SWEET7b (SWEET7B) from Oryza sativa subsp. japonica (Rice).